Here is a 126-residue protein sequence, read N- to C-terminus: Ribosome-binding factor A (126 aa).

Belongs to the RbfA family. Monomer. Binds 30S ribosomal subunits, but not 50S ribosomal subunits or 70S ribosomes.

The protein resides in the cytoplasm. In terms of biological role, one of several proteins that assist in the late maturation steps of the functional core of the 30S ribosomal subunit. Associates with free 30S ribosomal subunits (but not with 30S subunits that are part of 70S ribosomes or polysomes). Required for efficient processing of 16S rRNA. May interact with the 5'-terminal helix region of 16S rRNA. This chain is Ribosome-binding factor A, found in Histophilus somni (strain 129Pt) (Haemophilus somnus).